We begin with the raw amino-acid sequence, 291 residues long: MKKKLILGLVMMMALFSLAACGGGGNVVKTDSGDVTQDELYDAMKDKYGSEFVQQLTFEKILGDKYKVSDEDVDKKFKEYKSQYGDQFSAVLAQSGLTEKSFKSQLKYNLLVQKATEANADTSDKALKEYYKTWQPDITVSHILVADENKAKEVEQKLKDGAKFADLAKEYSTDTATKENGGQLAPFGSGKMDPAFEKAAYALKNKGDISAPVKTQYGYHIIQMDKPATKTTFDKDKKAVKEAYLASQLTTENMQKTLKKEYKDANVKVEDKDLKDAFKDFDGSASKDSSK.

Residues 1-20 (MKKKLILGLVMMMALFSLAA) form the signal peptide. Cysteine 21 carries the N-palmitoyl cysteine lipid modification. A lipid anchor (S-diacylglycerol cysteine) is attached at cysteine 21. In terms of domain architecture, PpiC spans 135-226 (QPDITVSHIL…YGYHIIQMDK (92 aa)).

The protein belongs to the PrsA family.

The protein localises to the cell membrane. It carries out the reaction [protein]-peptidylproline (omega=180) = [protein]-peptidylproline (omega=0). Its function is as follows. Plays a major role in protein secretion by helping the post-translocational extracellular folding of several secreted proteins. This is Foldase protein PrsA 2 (prsA2) from Listeria innocua serovar 6a (strain ATCC BAA-680 / CLIP 11262).